Here is a 524-residue protein sequence, read N- to C-terminus: tRNA-2-methylthio-N(6)-dimethylallyladenosine synthase (524 aa).

Over residues 1-12 (MNTHPSHPDHPA) the composition is skewed to basic and acidic residues. Positions 1-23 (MNTHPSHPDHPADTLPARGNREG) are disordered. In terms of domain architecture, MTTase N-terminal spans 27–143 (RTYEVRTFGC…LPTLLNRAEH (117 aa)). Cys-36, Cys-72, Cys-106, Cys-180, Cys-184, and Cys-187 together coordinate [4Fe-4S] cluster. In terms of domain architecture, Radical SAM core spans 166 to 402 (RESAYAGWVS…MALQERICEE (237 aa)). Residues 405–476 (QKFIGQTVEL…PFFLIADAGV (72 aa)) form the TRAM domain.

This sequence belongs to the methylthiotransferase family. MiaB subfamily. As to quaternary structure, monomer. Requires [4Fe-4S] cluster as cofactor.

The protein resides in the cytoplasm. The enzyme catalyses N(6)-dimethylallyladenosine(37) in tRNA + (sulfur carrier)-SH + AH2 + 2 S-adenosyl-L-methionine = 2-methylsulfanyl-N(6)-dimethylallyladenosine(37) in tRNA + (sulfur carrier)-H + 5'-deoxyadenosine + L-methionine + A + S-adenosyl-L-homocysteine + 2 H(+). Functionally, catalyzes the methylthiolation of N6-(dimethylallyl)adenosine (i(6)A), leading to the formation of 2-methylthio-N6-(dimethylallyl)adenosine (ms(2)i(6)A) at position 37 in tRNAs that read codons beginning with uridine. This is tRNA-2-methylthio-N(6)-dimethylallyladenosine synthase from Corynebacterium efficiens (strain DSM 44549 / YS-314 / AJ 12310 / JCM 11189 / NBRC 100395).